An 879-amino-acid polypeptide reads, in one-letter code: Valine--tRNA ligase (879 aa).

The 'HIGH' region signature appears at 45-55 (PNVTGKLHLGH). The short motif at 521 to 525 (KMSKS) is the 'KMSKS' region element. Lys-524 provides a ligand contact to ATP. Residues 806–879 (LTELVNVDEE…ERMKELKESK (74 aa)) are a coiled coil.

This sequence belongs to the class-I aminoacyl-tRNA synthetase family. ValS type 1 subfamily. In terms of assembly, monomer.

The protein resides in the cytoplasm. It catalyses the reaction tRNA(Val) + L-valine + ATP = L-valyl-tRNA(Val) + AMP + diphosphate. Its function is as follows. Catalyzes the attachment of valine to tRNA(Val). As ValRS can inadvertently accommodate and process structurally similar amino acids such as threonine, to avoid such errors, it has a 'posttransfer' editing activity that hydrolyzes mischarged Thr-tRNA(Val) in a tRNA-dependent manner. The polypeptide is Valine--tRNA ligase (Lactobacillus johnsonii (strain CNCM I-12250 / La1 / NCC 533)).